A 766-amino-acid chain; its full sequence is MPEHEERHSHGVNRSLSLGSSMRSLFKSQRSRGPSDRGANGTPGPAQKVDIRVDTASASREHTPVVHKTPQSANPELQQPRHHLGLPNILKLNLTPTNSNPQSKSGSPVSQNTSQESLITDTDIEVEDYRPSKDSRRTVRNASPMSSNGNLPINANTVIGPDTSSNNIDSMLDGTGLRPFYEEADSSDYIENLRSFPLPTGHYAPGFIQPPKSPTSSRVPSRSNSRKGREHAGTVSAAQLPRYNETPGKCILDLEYFKLYEDGHHVHTLKVMTSVNSDANGNSHNHASKNDGHLDLPKGDDGSVVRQKSKFSLSGFFKPHSKEDIANADEKLKYAVSLLPRNKICSKVETDRDTFAPVFTKTRSHVQSGSDDSSDDDEELDDPSIPKIVNKNAAVGSQELKLINNLSEKIRMGLSTAAKNKHNQSSKHRTPSGAGVQDENQPAFADLYGKCVAVVGHGAYGVVKVCARTRDEKDDLPATKTYMDSKKIYFAVKELKPRPSDPIEKFSTRITSEFIIGHSLSHYYDKNGEQSAPNILSIIDLLEYNDTFIEVMEFCPAGDLYSLLTARKNKIGKPLHPLEADCFMKQLLKGIQFMHDHGVAHCDLKPENILLHPNGLLKICDFGTSCVFQTAWERHVHFQTGLQGSEPYVAPEEYNPKKEYDPRLVDCWSIGIVYCTMIMGHYLWRNAARGKDSLYDSFYEEMASKKEFYVFEELRHINQEINRLRRIALYQIFQPNPEKRISIDKLLQTGWMRHTKCCVPYKNIPR.

5 disordered regions span residues 1-165 (MPEH…DTSS), 201-240 (GHYA…AAQL), 277-297 (SDAN…LDLP), 362-384 (TRSH…DDPS), and 417-437 (AAKN…AGVQ). The segment covering 14–25 (RSLSLGSSMRSL) has biased composition (low complexity). Positions 49–64 (VDIRVDTASASREHTP) are enriched in basic and acidic residues. The segment covering 94-120 (LTPTNSNPQSKSGSPVSQNTSQESLIT) has biased composition (polar residues). Residues 127–137 (EDYRPSKDSRR) are compositionally biased toward basic and acidic residues. 2 stretches are compositionally biased toward polar residues: residues 140-165 (RNAS…DTSS) and 214-223 (PTSSRVPSRS). Residues 288-297 (SKNDGHLDLP) are compositionally biased toward basic and acidic residues. Over residues 372 to 382 (DSSDDDEELDD) the composition is skewed to acidic residues. Residues 419–430 (KNKHNQSSKHRT) are compositionally biased toward basic residues. The Protein kinase domain maps to 449-752 (GKCVAVVGHG…IDKLLQTGWM (304 aa)). Residues 455 to 463 (VGHGAYGVV) and lysine 493 each bind ATP. Aspartate 603 serves as the catalytic Proton acceptor.

It belongs to the protein kinase superfamily. CAMK Ser/Thr protein kinase family. NPR/HAL subfamily. HAL5 sub-subfamily.

The protein localises to the cytoplasm. The enzyme catalyses L-seryl-[protein] + ATP = O-phospho-L-seryl-[protein] + ADP + H(+). The catalysed reaction is L-threonyl-[protein] + ATP = O-phospho-L-threonyl-[protein] + ADP + H(+). The chain is Probable serine/threonine-protein kinase KKQ8 (KKQ8) from Candida glabrata (strain ATCC 2001 / BCRC 20586 / JCM 3761 / NBRC 0622 / NRRL Y-65 / CBS 138) (Yeast).